A 199-amino-acid chain; its full sequence is Recombination protein RecR (199 aa).

The C4-type zinc finger occupies 58-73 (CARCGNITSADLCDIC). The Toprim domain maps to 81–176 (GELCVVEDVA…QVTSLAQGVP (96 aa)).

Belongs to the RecR family.

Its function is as follows. May play a role in DNA repair. It seems to be involved in an RecBC-independent recombinational process of DNA repair. It may act with RecF and RecO. The protein is Recombination protein RecR of Cereibacter sphaeroides (strain ATCC 17025 / ATH 2.4.3) (Rhodobacter sphaeroides).